The primary structure comprises 646 residues: Leukotriene A-4 hydrolase homolog (646 aa).

A peptide is bound by residues 172–174 (QCQ) and 307–312 (PYGGME). Histidine 336 contributes to the Zn(2+) binding site. The active-site Proton acceptor is the glutamate 337. The Zn(2+) site is built by histidine 340 and glutamate 359. The active-site Proton donor is the tyrosine 424.

It belongs to the peptidase M1 family. Requires Zn(2+) as cofactor.

Its subcellular location is the cytoplasm. It is found in the nucleus. It catalyses the reaction leukotriene A4 + H2O = leukotriene B4. The protein operates within lipid metabolism; leukotriene B4 biosynthesis. Its function is as follows. Aminopeptidase that preferentially cleaves tripeptides. Also has low epoxide hydrolase activity (in vitro). Can hydrolyze an epoxide moiety of LTA(4) to form LTB(4) (in vitro). This Botryotinia fuckeliana (strain B05.10) (Noble rot fungus) protein is Leukotriene A-4 hydrolase homolog.